A 231-amino-acid polypeptide reads, in one-letter code: Membrane protein YknW (231 aa).

5 helical membrane passes run 38 to 58 (VWGPLLIVAAIIIVGAVLQSL), 93 to 113 (GAIIGGIAALFIAPLIYWLCV), 128 to 148 (LSLFVSLISSLGLLVNGIVAF), 171 to 191 (LASVLNTFEIFSIWSFVLLAI), and 205 to 225 (WISAIILFGILVVFSLFSGLI).

Interacts with a complex composed of YknX, YknY and YknZ.

The protein localises to the cell membrane. Functionally, part of an unusual four-component transporter, which is required for protection against the killing factor SdpC (sporulation-delaying protein). Has a role in the assembly of the YknXYZ complex. The chain is Membrane protein YknW (yknW) from Bacillus subtilis (strain 168).